A 159-amino-acid polypeptide reads, in one-letter code: Ribosomal RNA large subunit methyltransferase H (159 aa).

S-adenosyl-L-methionine is bound by residues Leu76, Gly108, and 127 to 132 (FSKMTL).

Belongs to the RNA methyltransferase RlmH family. Homodimer.

It localises to the cytoplasm. The catalysed reaction is pseudouridine(1915) in 23S rRNA + S-adenosyl-L-methionine = N(3)-methylpseudouridine(1915) in 23S rRNA + S-adenosyl-L-homocysteine + H(+). In terms of biological role, specifically methylates the pseudouridine at position 1915 (m3Psi1915) in 23S rRNA. The protein is Ribosomal RNA large subunit methyltransferase H of Bacillus thuringiensis subsp. konkukian (strain 97-27).